Reading from the N-terminus, the 801-residue chain is uncharacterized protein (801 aa).

One can recognise a PE domain in the interval 1–93 (MSWVMVSPEL…GGAYAAAEAA (93 aa)).

This sequence belongs to the mycobacterial PE family. PGRS subfamily.

This is an uncharacterized protein from Mycobacterium tuberculosis (strain ATCC 25618 / H37Rv).